The primary structure comprises 420 residues: Phosphoribosylamine--glycine ligase (420 aa).

Residues 108 to 314 (KQFMEKYAIP…FAALIDALLH (207 aa)) enclose the ATP-grasp domain. An ATP-binding site is contributed by 134 to 195 (LNERGVPIVI…EDFLAGEEFS (62 aa)). Positions 284 and 286 each coordinate Mg(2+).

It belongs to the GARS family. Mg(2+) serves as cofactor. It depends on Mn(2+) as a cofactor.

The catalysed reaction is 5-phospho-beta-D-ribosylamine + glycine + ATP = N(1)-(5-phospho-beta-D-ribosyl)glycinamide + ADP + phosphate + H(+). The protein operates within purine metabolism; IMP biosynthesis via de novo pathway; N(1)-(5-phospho-D-ribosyl)glycinamide from 5-phospho-alpha-D-ribose 1-diphosphate: step 2/2. This is Phosphoribosylamine--glycine ligase from Listeria monocytogenes serovar 1/2a (strain ATCC BAA-679 / EGD-e).